The following is a 322-amino-acid chain: MADEVKLSKLIKDNKSILEVYQGQEYVNAKKIYVSDIYRPGLELTGYFDFYPAQRIQLLGRTEISYAARLDHEIRTHVFTKMATKATPCFLISRSLPVPEELSEAAEKANIPILRTSESTTYISSILTEYLRARLAKRNSIHGVLVEIKGMGVLLTGASGVGKSETALGLVQRGHRLIADDRVDVFQKDHNTVVGEAPKILRHLMEIRGIGIIDVMNLFGAGAVKSRTEIQLVINLVNWDPKANYDRLGFQENTREICNVEIPQVNIPVKVGRNIEIIIEVAAMNFRAKKMGYDATQMFDNNLTNLISEHSKEDTDKVQHDD.

Residues His-142 and Lys-163 contribute to the active site. 157-164 is an ATP binding site; that stretch reads GASGVGKS. Ser-164 is a binding site for Mg(2+). Asp-181 serves as the catalytic Proton acceptor; for phosphorylation activity. Proton donor; for dephosphorylation activity. The interval 205–214 is important for the catalytic mechanism of both phosphorylation and dephosphorylation; that stretch reads MEIRGIGIID. Glu-206 serves as a coordination point for Mg(2+). Arg-247 is an active-site residue. The interval 268 to 273 is important for the catalytic mechanism of dephosphorylation; sequence PVKVGR.

It belongs to the HPrK/P family. Homohexamer. It depends on Mg(2+) as a cofactor.

The enzyme catalyses [HPr protein]-L-serine + ATP = [HPr protein]-O-phospho-L-serine + ADP + H(+). The catalysed reaction is [HPr protein]-O-phospho-L-serine + phosphate + H(+) = [HPr protein]-L-serine + diphosphate. Its function is as follows. Catalyzes the ATP- as well as the pyrophosphate-dependent phosphorylation of a specific serine residue in HPr, a phosphocarrier protein of the phosphoenolpyruvate-dependent sugar phosphotransferase system (PTS). HprK/P also catalyzes the pyrophosphate-producing, inorganic phosphate-dependent dephosphorylation (phosphorolysis) of seryl-phosphorylated HPr (P-Ser-HPr). The two antagonistic activities of HprK/P are regulated by several intracellular metabolites, which change their concentration in response to the absence or presence of rapidly metabolisable carbon sources (glucose, fructose, etc.) in the growth medium. Therefore, by controlling the phosphorylation state of HPr, HPrK/P is a sensor enzyme that plays a major role in the regulation of carbon metabolism and sugar transport: it mediates carbon catabolite repression (CCR), and regulates PTS-catalyzed carbohydrate uptake and inducer exclusion. In Lactobacillus acidophilus (strain ATCC 700396 / NCK56 / N2 / NCFM), this protein is HPr kinase/phosphorylase.